The primary structure comprises 278 residues: uncharacterized protein (278 aa).

This is an uncharacterized protein from Escherichia coli (Bacteriophage T4).